The chain runs to 393 residues: Methylthioribose-1-phosphate isomerase (393 aa).

D265 serves as the catalytic Proton donor.

This sequence belongs to the eIF-2B alpha/beta/delta subunits family. MtnA subfamily.

The protein localises to the cytoplasm. The protein resides in the nucleus. It carries out the reaction 5-(methylsulfanyl)-alpha-D-ribose 1-phosphate = 5-(methylsulfanyl)-D-ribulose 1-phosphate. It functions in the pathway amino-acid biosynthesis; L-methionine biosynthesis via salvage pathway; L-methionine from S-methyl-5-thio-alpha-D-ribose 1-phosphate: step 1/6. Its function is as follows. Catalyzes the interconversion of methylthioribose-1-phosphate (MTR-1-P) into methylthioribulose-1-phosphate (MTRu-1-P). The sequence is that of Methylthioribose-1-phosphate isomerase from Cryptococcus neoformans var. neoformans serotype D (strain JEC21 / ATCC MYA-565) (Filobasidiella neoformans).